The following is a 644-amino-acid chain: Arginine--tRNA ligase (644 aa).

The 'HIGH' region motif lies at 129-139 (ANPIHPLHLGH).

The protein belongs to the class-I aminoacyl-tRNA synthetase family.

The protein resides in the cytoplasm. It catalyses the reaction tRNA(Arg) + L-arginine + ATP = L-arginyl-tRNA(Arg) + AMP + diphosphate. This Aeropyrum pernix (strain ATCC 700893 / DSM 11879 / JCM 9820 / NBRC 100138 / K1) protein is Arginine--tRNA ligase (argS).